We begin with the raw amino-acid sequence, 235 residues long: 15,16-dihydrobiliverdin:ferredoxin oxidoreductase (235 aa).

It belongs to the HY2 family.

The catalysed reaction is 15,16-dihydrobiliverdin + oxidized 2[4Fe-4S]-[ferredoxin] = biliverdin IXalpha + reduced 2[4Fe-4S]-[ferredoxin] + 2 H(+). Its function is as follows. Catalyzes the two-electron reduction of biliverdin IX-alpha at the C15 methine bridge. The protein is 15,16-dihydrobiliverdin:ferredoxin oxidoreductase of Synechococcus sp. (strain CC9605).